Reading from the N-terminus, the 432-residue chain is Adenylosuccinate synthetase (432 aa).

Residues 13-19 (GDEGKGK) and 41-43 (GHT) each bind GTP. Asp14 functions as the Proton acceptor in the catalytic mechanism. 2 residues coordinate Mg(2+): Asp14 and Gly41. IMP is bound by residues 14 to 17 (DEGK), 39 to 42 (NAGH), Thr130, Arg144, Gln225, Thr240, and Arg304. The active-site Proton donor is His42. Position 300–306 (300–306 (ATTGRRR)) interacts with substrate. GTP contacts are provided by residues Arg306, 332-334 (KLD), and 415-417 (STG).

Belongs to the adenylosuccinate synthetase family. As to quaternary structure, homodimer. Requires Mg(2+) as cofactor.

It is found in the cytoplasm. The enzyme catalyses IMP + L-aspartate + GTP = N(6)-(1,2-dicarboxyethyl)-AMP + GDP + phosphate + 2 H(+). It functions in the pathway purine metabolism; AMP biosynthesis via de novo pathway; AMP from IMP: step 1/2. Plays an important role in the de novo pathway of purine nucleotide biosynthesis. Catalyzes the first committed step in the biosynthesis of AMP from IMP. This chain is Adenylosuccinate synthetase, found in Serratia proteamaculans (strain 568).